We begin with the raw amino-acid sequence, 333 residues long: Protein APEM9 (333 aa).

Residues M1–A90 are Cytoplasmic-facing. Residues A91 to C102 traverse the membrane as a helical segment. The Peroxisomal portion of the chain corresponds to L103 to S268. The helical transmembrane segment at R269 to L285 threads the bilayer. Residues K286–T333 lie on the Cytoplasmic side of the membrane.

As to quaternary structure, interacts with PEX6 and PEX19-1, but not with PEX1. Interacts (via N-terminus) with PEX13, and (via N-terminus and C-terminus) with PEX16. In terms of tissue distribution, expressed in roots, leaves, stems, flowers, buds and fruits.

The protein resides in the peroxisome membrane. Its function is as follows. Involved in peroxisome biogenesis and matrix protein import. Required for pollen maturation and in vivo germination via its role in peroxisomal function, which partially involves jasmonic acid biosynthesis. Transported to peroxisomes via the interaction with PEX19-1. Required for peroxisomal protein import by acting as an anchoring protein for the AAA ATPase complex, which consists of PEX1 and PEX6. This Arabidopsis thaliana (Mouse-ear cress) protein is Protein APEM9.